The sequence spans 171 residues: Macro domain-containing protein RSc0334 (171 aa).

The Macro domain maps to 1 to 171 (MPIPTVTLRA…LYETALNEAR (171 aa)).

It belongs to the MacroD-type family.

The protein is Macro domain-containing protein RSc0334 of Ralstonia nicotianae (strain ATCC BAA-1114 / GMI1000) (Ralstonia solanacearum).